The primary structure comprises 270 residues: NAD kinase (270 aa).

The active-site Proton acceptor is Asp49. Residues Asp49–Gly50, Arg54, Asn126–Glu127, Arg152, Asp154, Thr165–Ser170, Ala189, and Gln227 contribute to the NAD(+) site.

Belongs to the NAD kinase family. A divalent metal cation is required as a cofactor.

It localises to the cytoplasm. The enzyme catalyses NAD(+) + ATP = ADP + NADP(+) + H(+). Involved in the regulation of the intracellular balance of NAD and NADP, and is a key enzyme in the biosynthesis of NADP. Catalyzes specifically the phosphorylation on 2'-hydroxyl of the adenosine moiety of NAD to yield NADP. The polypeptide is NAD kinase (Lactococcus lactis subsp. lactis (strain IL1403) (Streptococcus lactis)).